Here is a 195-residue protein sequence, read N- to C-terminus: Imidazoleglycerol-phosphate dehydratase (195 aa).

This sequence belongs to the imidazoleglycerol-phosphate dehydratase family.

The protein resides in the cytoplasm. The enzyme catalyses D-erythro-1-(imidazol-4-yl)glycerol 3-phosphate = 3-(imidazol-4-yl)-2-oxopropyl phosphate + H2O. It participates in amino-acid biosynthesis; L-histidine biosynthesis; L-histidine from 5-phospho-alpha-D-ribose 1-diphosphate: step 6/9. This is Imidazoleglycerol-phosphate dehydratase from Frankia casuarinae (strain DSM 45818 / CECT 9043 / HFP020203 / CcI3).